Consider the following 299-residue polypeptide: Ficolin-3 (299 aa).

Residues 1 to 23 (MDLLWILPSLWLLLLGGPACLKT) form the signal peptide. The segment at 44–81 (PSCPGAPGSPGEKGAPGPQGPPGPPGKMGPKGEPGDPV) is disordered. The Collagen-like domain occupies 48 to 80 (GAPGSPGEKGAPGPQGPPGPPGKMGPKGEPGDP). 6 positions are modified to hydroxyproline: Pro-50, Pro-53, Pro-59, Pro-65, Pro-68, and Pro-77. Positions 61-70 (PQGPPGPPGK) are enriched in pro residues. In terms of domain architecture, Fibrinogen C-terminal spans 84–299 (LRCQEGPRNC…PYRRVRMMLR (216 aa)). Disulfide bonds link Cys-86–Cys-110 and Cys-93–Cys-121. Asn-189 is a glycosylation site (N-linked (GlcNAc...) (complex) asparagine). Residues Asp-237, Asp-239, Ser-241, and Ser-243 each contribute to the Ca(2+) site. A disulfide bridge connects residues Cys-245 and Cys-258. Position 258-259 (258-259 (CY)) interacts with a carbohydrate.

This sequence belongs to the ficolin lectin family. In terms of assembly, homotrimer. May form an octadecamer consisting of an elementary trimer unit. Does not interact with fibronectin, elastin or zymosan. Interacts with MASP1 and MASP2. Post-translationally, the N-terminus is blocked. Liver and lung. In liver it is produced by bile duct epithelial cells and hepatocytes. In lung it is produced by both ciliated bronchial epithelial cells and type II alveolar epithelial cells.

Its subcellular location is the secreted. Functionally, may function in innate immunity through activation of the lectin complement pathway. Calcium-dependent and GlcNAc-binding lectin. Has affinity with GalNAc, GlcNAc, D-fucose, as mono/oligosaccharide and lipopolysaccharides from S.typhimurium and S.minnesota. This Homo sapiens (Human) protein is Ficolin-3 (FCN3).